A 1458-amino-acid polypeptide reads, in one-letter code: Secretory phospholipase A2 receptor (1458 aa).

Positions 1 to 23 (MLLSLLLLLLLGAPRRCTEGAAA) are cleaved as a signal peptide. The Extracellular segment spans residues 24-1393 (ALSPERVLKW…EHPGKGPSHS (1370 aa)). Disulfide bonds link C49–C62, C87–C104, C176–C202, C190–C217, C258–C352, C328–C344, C404–C499, C476–C491, C615–C632, C697–C794, C772–C786, C838–C935, C912–C927, C1065–C1085, C1207–C1221, C1278–C1373, and C1350–C1365. One can recognise a Ricin B-type lectin domain in the interval 49–113 (CIQAGKSVLT…CDSTHVSLRW (65 aa)). Residue N91 is glycosylated (N-linked (GlcNAc...) asparagine). Residues 171–219 (AHGTPCMFPFQYNHQWHHECTREGRQDDSLWCATTSRYERDEKWGFCPD) form the Fibronectin type-II domain. 8 consecutive C-type lectin domains span residues 227–356 (CDAV…KKYL), 374–502 (TDCE…CKKP), 511–645 (SGCQ…KQPV), 660–798 (HPCY…KIPR), 815–939 (LFHQ…KRKT), 954–1098 (GTCP…EKIQ), 1117–1231 (LEYG…AICH), and 1243–1376 (ELCS…CKMK). Residues N408, N431, and N452 are each glycosylated (N-linked (GlcNAc...) asparagine). The helical transmembrane segment at 1394-1416 (IVPLAVALTLVVILAIITLSFYI) threads the bilayer. Residues 1417 to 1458 (YKQNKGFFRRLAGVGNSYYPTTNFSTIHLEENILISDLEKND) are Cytoplasmic-facing. The Endocytosis signal signature appears at 1432–1438 (NSYYPTT).

Interacts with sPLA2-IB/PLA2G1B; this interaction mediates intracellular signaling as well as clearance of extracellular sPLA2-IB/PLA2G1B via endocytotic pathway. Interacts with sPLA2-X/PLA2G10; this interaction mediates sPLA2-X/PLA2G10 clearance and inactivation. Post-translationally, the secretory phospholipase A2 receptor form may be produced by the action of metalloproteinases. It contains all extracellular domains and only lacks transmembrane and cytosolic regions. It is however unclear whether this form is produced by proteolytic cleavage as suggested by some experiments, or by alternative splicing. As to expression, lung, skeletal muscle, brain, kidney and heart.

It localises to the cell membrane. The protein localises to the secreted. Receptor for secretory phospholipase A2 (sPLA2). Also able to bind to snake PA2-like toxins. Although its precise function remains unclear, binding of sPLA2 to its receptor participates in both positive and negative regulation of sPLA2 functions as well as clearance of sPLA2. Binding of sPLA2-IB/PLA2G1B induces various effects depending on the cell type, such as activation of the mitogen-activated protein kinase (MAPK) cascade to induce cell proliferation, the production of lipid mediators, selective release of arachidonic acid in bone marrow-derived mast cells. In neutrophils, binding of sPLA2-IB/PLA2G1B can activate p38 MAPK to stimulate elastase release and cell adhesion. May be involved in responses in pro-inflammatory cytokine productions during endotoxic shock. Also has endocytic properties and rapidly internalizes sPLA2 ligands, which is particularly important for the clearance of extracellular sPLA2s to protect their potent enzymatic activities. The soluble secretory phospholipase A2 receptor form is circulating and acts as a negative regulator of sPLA2 functions by blocking the biological functions of sPLA2-IB/PLA2G1B and sPLA2-X/PLA2G10. This chain is Secretory phospholipase A2 receptor (PLA2R1), found in Oryctolagus cuniculus (Rabbit).